The following is a 274-amino-acid chain: MRKIAIYGKGGIGKSTTTQNTVAGLAEMGKKVMVVGCDPKADSTRLLLGGLTQKTVLDTLREEGEDVELEDIIKEGYGASRCTESGGPEPGVGCAGRGIITSVNMLEQLGAYDDEWGLDYVFYDVLGDVVCGGFAMPIRDGKAEEIYIVVSGEMMAMYAANNICKGILKYADAGGVRLGGLICNSRKVDNEMEMIQELARQLGTQMIHFVPRDNMVQRAEINRKTVIDFDPAHQQADEYRALAKKIDDNEMFVIPKPLEIEELEKLLIDFGIAN.

8 to 15 (GKGGIGKS) is a binding site for ATP. C94 contacts [4Fe-4S] cluster. R97 bears the ADP-ribosylarginine; by dinitrogenase reductase ADP-ribosyltransferase mark. C131 is a [4Fe-4S] cluster binding site.

The protein belongs to the NifH/BchL/ChlL family. Homodimer. [4Fe-4S] cluster serves as cofactor. In terms of processing, the reversible ADP-ribosylation of Arg-97 inactivates the nitrogenase reductase and regulates nitrogenase activity.

It carries out the reaction N2 + 8 reduced [2Fe-2S]-[ferredoxin] + 16 ATP + 16 H2O = H2 + 8 oxidized [2Fe-2S]-[ferredoxin] + 2 NH4(+) + 16 ADP + 16 phosphate + 6 H(+). Functionally, the key enzymatic reactions in nitrogen fixation are catalyzed by the nitrogenase complex, which has 2 components: the iron protein and the molybdenum-iron protein. In Chlorobium phaeobacteroides (strain BS1), this protein is Nitrogenase iron protein.